The sequence spans 212 residues: Large ribosomal subunit protein uL3 (212 aa).

The tract at residues 136–155 (THGNSLSHRSNGSIGQNQTP) is disordered. Gln-153 carries the N5-methylglutamine modification.

The protein belongs to the universal ribosomal protein uL3 family. Part of the 50S ribosomal subunit. Forms a cluster with proteins L14 and L19. In terms of processing, methylated by PrmB.

In terms of biological role, one of the primary rRNA binding proteins, it binds directly near the 3'-end of the 23S rRNA, where it nucleates assembly of the 50S subunit. The sequence is that of Large ribosomal subunit protein uL3 from Shewanella oneidensis (strain ATCC 700550 / JCM 31522 / CIP 106686 / LMG 19005 / NCIMB 14063 / MR-1).